Reading from the N-terminus, the 46-residue chain is Esculentin-1a/b (46 aa).

Cysteine 40 and cysteine 46 are disulfide-bonded.

Belongs to the frog skin active peptide (FSAP) family. Esculentin subfamily. In terms of tissue distribution, expressed by the skin glands.

The protein localises to the secreted. Its function is as follows. Antimicrobial peptide. Stimulates insulin secretion by BRIN-BD11 cells in vitro. Shows hemolytic activity. In Pelophylax ridibundus (Marsh frog), this protein is Esculentin-1a/b.